The sequence spans 228 residues: Aquaporin Z 1 (228 aa).

Helical transmembrane passes span 9 to 29 (FLGTFWLVLGGCGSAVLAAAF) and 34 to 54 (IGLLGVSFAFGLTVLTMAYAV). The NPA 1 motif lies at 63-65 (NPA). 3 helical membrane passes run 82-102 (VGYILAQVTGAIAAAAVLYVI), 129-149 (LTAALVTEVVMTAFFLLIILG), and 156-176 (PVGFAPIAIGLGLTLIHLVSI). Residues 184–186 (NPA) carry the NPA 2 motif. Residues 204-224 (WLFWVAPLIGAVIAGIVWKIV) form a helical membrane-spanning segment.

The protein belongs to the MIP/aquaporin (TC 1.A.8) family. As to quaternary structure, homotetramer.

Its subcellular location is the cell inner membrane. It catalyses the reaction H2O(in) = H2O(out). Functionally, channel that permits osmotically driven movement of water in both directions. It is involved in the osmoregulation and in the maintenance of cell turgor during volume expansion in rapidly growing cells. It mediates rapid entry or exit of water in response to abrupt changes in osmolarity. The polypeptide is Aquaporin Z 1 (Rhizobium meliloti (strain 1021) (Ensifer meliloti)).